The sequence spans 242 residues: MSMLCYTLIIAFLIGIWAAPKSEDNVPLGSPATSDLSDTSCAQTHKALKTSRNTDQRHPAPKKAEDQELGSAANIIVDPKLFQKRRFQSPRVLFSTQPPPLSRDEQSVEFLENEDALNRNIRSKRENHPVNDHGEYSVCDSVSVWVNKTTATDIKGKPVTVMVDVNLNNHVYKQYFFETKCKNPNPVPSGCRGIDSRHWNSYCTTTQSFVKALTKEGNQASWRFIRIDTACVCVISRKTGNF.

Residues 1–18 (MSMLCYTLIIAFLIGIWA) form the signal peptide. Positions 19–125 (APKSEDNVPL…ALNRNIRSKR (107 aa)) are excised as a propeptide. Residues 26–69 (VPLGSPATSDLSDTSCAQTHKALKTSRNTDQRHPAPKKAEDQEL) form a disordered region. A compositionally biased stretch (polar residues) spans 31-43 (PATSDLSDTSCAQ). A compositionally biased stretch (basic and acidic residues) spans 52–66 (RNTDQRHPAPKKAED). 3 disulfides stabilise this stretch: Cys-139/Cys-203, Cys-181/Cys-231, and Cys-191/Cys-233. Asn-147 is a glycosylation site (N-linked (GlcNAc...) asparagine).

This sequence belongs to the NGF-beta family. In terms of assembly, homodimer; non-covalently linked. Expressed by the venom gland.

It localises to the secreted. Nerve growth factor is important for the development and maintenance of the sympathetic and sensory nervous systems. It stimulates division and differentiation of sympathetic and embryonic sensory neurons as well as basal forebrain cholinergic neurons in the brain. Its relevance in the snake venom is not clear. However, it has been shown to inhibit metalloproteinase-dependent proteolysis of platelet glycoprotein Ib alpha, suggesting a metalloproteinase inhibition to prevent metalloprotease autodigestion and/or protection against prey proteases. Binds a lipid between the two protein chains in the homodimer. The lipid-bound form promotes histamine relase from mouse mast cells, contrary to the lipid-free form. In Demansia vestigiata (Lesser black whip snake), this protein is Venom nerve growth factor 1.